Here is a 53-residue protein sequence, read N- to C-terminus: ATP synthase F(0) complex subunit 8 (53 aa).

Residues 8-24 (PWLTTFLIVWISLIVIL) traverse the membrane as a helical segment.

This sequence belongs to the ATPase protein 8 family. Component of the ATP synthase complex composed at least of ATP5F1A/subunit alpha, ATP5F1B/subunit beta, ATP5MC1/subunit c (homooctomer), MT-ATP6/subunit a, MT-ATP8/subunit 8, ATP5ME/subunit e, ATP5MF/subunit f, ATP5MG/subunit g, ATP5MK/subunit k, ATP5MJ/subunit j, ATP5F1C/subunit gamma, ATP5F1D/subunit delta, ATP5F1E/subunit epsilon, ATP5PF/subunit F6, ATP5PB/subunit b, ATP5PD/subunit d, ATP5PO/subunit OSCP. ATP synthase complex consists of a soluble F(1) head domain (subunits alpha(3) and beta(3)) - the catalytic core - and a membrane F(0) domain - the membrane proton channel (subunits c, a, 8, e, f, g, k and j). These two domains are linked by a central stalk (subunits gamma, delta, and epsilon) rotating inside the F1 region and a stationary peripheral stalk (subunits F6, b, d, and OSCP).

The protein resides in the mitochondrion membrane. Subunit 8, of the mitochondrial membrane ATP synthase complex (F(1)F(0) ATP synthase or Complex V) that produces ATP from ADP in the presence of a proton gradient across the membrane which is generated by electron transport complexes of the respiratory chain. ATP synthase complex consist of a soluble F(1) head domain - the catalytic core - and a membrane F(1) domain - the membrane proton channel. These two domains are linked by a central stalk rotating inside the F(1) region and a stationary peripheral stalk. During catalysis, ATP synthesis in the catalytic domain of F(1) is coupled via a rotary mechanism of the central stalk subunits to proton translocation. In vivo, can only synthesize ATP although its ATP hydrolase activity can be activated artificially in vitro. Part of the complex F(0) domain. This chain is ATP synthase F(0) complex subunit 8, found in Alligator mississippiensis (American alligator).